The primary structure comprises 381 residues: Ribosome assembly 1 protein (381 aa).

N-acetylmethionine is present on M1. 3 disordered regions span residues 1 to 38 (MNYN…IKRQ), 164 to 216 (KDTF…DRDE), and 350 to 381 (FGSS…TRNK). At S172 the chain carries Phosphoserine. Positions 359–371 (NHYKPNYKNRKPN) are enriched in basic residues.

It is found in the nucleus. Its function is as follows. Involved in a late nucleoplasmic step of 60S ribosomal subunit assembly. The chain is Ribosome assembly 1 protein (RSA1) from Saccharomyces cerevisiae (strain ATCC 204508 / S288c) (Baker's yeast).